A 406-amino-acid chain; its full sequence is Argininosuccinate synthase (406 aa).

ATP contacts are provided by residues 11–19 and Ala-38; that span reads AYSGGLDTS. Residues Tyr-91 and Ser-96 each contribute to the L-citrulline site. Gly-121 contributes to the ATP binding site. L-aspartate-binding residues include Thr-123, Asn-127, and Asp-128. Asn-127 contacts L-citrulline. L-citrulline-binding residues include Arg-131, Ser-181, Ser-190, Glu-266, and Tyr-278.

Belongs to the argininosuccinate synthase family. Type 1 subfamily. As to quaternary structure, homotetramer.

It localises to the cytoplasm. It catalyses the reaction L-citrulline + L-aspartate + ATP = 2-(N(omega)-L-arginino)succinate + AMP + diphosphate + H(+). It functions in the pathway amino-acid biosynthesis; L-arginine biosynthesis; L-arginine from L-ornithine and carbamoyl phosphate: step 2/3. The chain is Argininosuccinate synthase from Campylobacter lari (strain RM2100 / D67 / ATCC BAA-1060).